Here is a 273-residue protein sequence, read N- to C-terminus: Probable ribosomal RNA small subunit methyltransferase A (273 aa).

6 residues coordinate S-adenosyl-L-methionine: Asn26, Leu28, Gly53, Glu74, Asp98, and Asn113.

This sequence belongs to the class I-like SAM-binding methyltransferase superfamily. rRNA adenine N(6)-methyltransferase family. RsmA subfamily.

The protein localises to the cytoplasm. Its function is as follows. Specifically dimethylates two adjacent adenosines in the loop of a conserved hairpin near the 3'-end of 16S rRNA in the 30S particle. May play a critical role in biogenesis of 30S subunits. The chain is Probable ribosomal RNA small subunit methyltransferase A from Methanothermobacter thermautotrophicus (strain ATCC 29096 / DSM 1053 / JCM 10044 / NBRC 100330 / Delta H) (Methanobacterium thermoautotrophicum).